The primary structure comprises 332 residues: Biotin synthase (332 aa).

In terms of domain architecture, Radical SAM core spans 47–273 (YYGNKVKLNM…MNPTKEIRIA (227 aa)). [4Fe-4S] cluster contacts are provided by cysteine 65, cysteine 69, and cysteine 72. [2Fe-2S] cluster contacts are provided by cysteine 109, cysteine 141, cysteine 201, and arginine 271.

Belongs to the radical SAM superfamily. Biotin synthase family. As to quaternary structure, homodimer. It depends on [4Fe-4S] cluster as a cofactor. [2Fe-2S] cluster serves as cofactor.

It catalyses the reaction (4R,5S)-dethiobiotin + (sulfur carrier)-SH + 2 reduced [2Fe-2S]-[ferredoxin] + 2 S-adenosyl-L-methionine = (sulfur carrier)-H + biotin + 2 5'-deoxyadenosine + 2 L-methionine + 2 oxidized [2Fe-2S]-[ferredoxin]. It functions in the pathway cofactor biosynthesis; biotin biosynthesis; biotin from 7,8-diaminononanoate: step 2/2. In terms of biological role, catalyzes the conversion of dethiobiotin (DTB) to biotin by the insertion of a sulfur atom into dethiobiotin via a radical-based mechanism. This is Biotin synthase from Geobacillus thermodenitrificans (strain NG80-2).